A 261-amino-acid chain; its full sequence is Phosphatidylglycerol--prolipoprotein diacylglyceryl transferase (261 aa).

The next 4 helical transmembrane spans lie at 12 to 32 (ISIR…VYLA), 41 to 61 (IIPD…IVGA), 87 to 107 (GIAG…LYFF), and 112 to 132 (LIHP…AQSI). A 1,2-diacyl-sn-glycero-3-phospho-(1'-sn-glycerol) is bound at residue Arg134. 3 consecutive transmembrane segments (helical) span residues 170–190 (QPTF…IIVL), 200–220 (GEIA…IEGM), and 229–249 (GLRV…GIII).

Belongs to the Lgt family.

Its subcellular location is the cell membrane. It catalyses the reaction L-cysteinyl-[prolipoprotein] + a 1,2-diacyl-sn-glycero-3-phospho-(1'-sn-glycerol) = an S-1,2-diacyl-sn-glyceryl-L-cysteinyl-[prolipoprotein] + sn-glycerol 1-phosphate + H(+). It functions in the pathway protein modification; lipoprotein biosynthesis (diacylglyceryl transfer). Catalyzes the transfer of the diacylglyceryl group from phosphatidylglycerol to the sulfhydryl group of the N-terminal cysteine of a prolipoprotein, the first step in the formation of mature lipoproteins. In Streptococcus sanguinis (strain SK36), this protein is Phosphatidylglycerol--prolipoprotein diacylglyceryl transferase.